The primary structure comprises 799 residues: MSQAGRDGGDSCYRLRCSLLGHELDVRGVARCPLWPGEGFVSVSRDRSSRLWVPDSPNRGFIELQRMSGHSNFVSCVCILPPSDLYPRGLIATGGNDQNICVFSLDSEKPLYTLKGHKNTVCSLSSGKFGTLLSGSWDTTGKVWLNDKCMMTLQGHTAAVWAVKILPEQGLMLTGSADKSIKLWKAGRCEMTFLGHEDCVRGLATINDTEFLSCSNDASVRRWLITGECLQIYYGHTNYIYSVCLFPNSQDFVTTSEDRSIRIWRKGECTQTIRLPAQSVWCCCVLDNGDIVVGASDGIIRVFTESPDRIASIEEIQAFENELSKATIDPKTGDLGDIKIDDLPGRDHLNEPGTRDGQTRLIKEDGKVEAYQWSTGEGRWMKIGDVVGSSGATQQTSGRVLFEGKEYDYVFTIDVNESGPSHKLPYNLTEDPWLVAYNFLQKNDLNPMFLDQVAKFIIDNTAGQTPSTNLGYTDPLTGGGRYIPGSSSTDNNGADPFTGGNRYVPGSSLQSDYSAAAADPFTGKNAYRSSTAPTPNAYFPKTKPVTFDQANPSQILGKLKELNESAPEERKLPEEDLMQLDKLLSVAVNPSGGTVTAQQLDTLWRVVNWPEDLIFPALDVLRISIKNPTVNEMFCNEKEGSQFSSYLLQLMSPSGKQANQLLALRTFCNSFFCDPGSCLLMVERDNVLSKVIELKTVNNKNIHIALATLMLNYAICLHKVSDIEGKAQCLSAISSVIEVVQDLEAIFRLLVALGTLISGDTNAMQLAKSLGVDSQIKKYMSVTEPAKVNECCRLLLNML.

7 WD repeats span residues 21–62 (GHEL…RGFI), 69–113 (GHSN…PLYT), 116–154 (GHKNTVCSLSSGKFGTLLSGSWDTTGKVWLNDKCMMTLQ), 155–194 (GHTAAVWAVKILPEQGLMLTGSADKSIKLWKAGRCEMTFL), 196–233 (HEDCVRGLATINDTEFLSCSNDASVRRWLITGECLQIY), 235–274 (GHTNYIYSVCLFPNSQDFVTTSEDRSIRIWRKGECTQTIR), and 276–314 (PAQSVWCCCVLDNGDIVVGASDGIIRVFTESPDRIASIE). The PFU domain maps to 372–471 (QWSTGEGRWM…AGQTPSTNLG (100 aa)). The PUL domain occupies 537–798 (AYFPKTKPVT…NECCRLLLNM (262 aa)). ARM repeat units follow at residues 550–592 (ANPS…NPSG), 593–624 (GTVTAQQLDTLWRVVNWPEDLIFPALDVLRIS), 625–673 (IKNP…SFFC), 674–719 (DPGS…CLHK), 720–759 (VSDIEGKAQCLSAISSVIEVVQDLEAIFRLLVALGTLISG), and 760–799 (DTNAMQLAKSLGVDSQIKKYMSVTEPAKVNECCRLLLNML).

This sequence belongs to the WD repeat PLAP family.

The protein localises to the nucleus. It is found in the cytoplasm. The protein resides in the synapse. Plays a role in protein ubiquitination, sorting and degradation through its association with VCP. Involved in ubiquitin-mediated membrane proteins trafficking to late endosomes in an ESCRT-dependent manner, and hence plays a role in synaptic vesicle recycling. May play a role in macroautophagy, regulating for instance the clearance of damaged lysosomes. Plays a role in cerebellar Purkinje cell development. Positively regulates cytosolic and calcium-independent phospholipase A2 activities in a tumor necrosis factor alpha (TNF-alpha)- or lipopolysaccharide (LPS)-dependent manner, and hence prostaglandin E2 biosynthesis. This Xenopus laevis (African clawed frog) protein is Phospholipase A-2-activating protein (plaa).